We begin with the raw amino-acid sequence, 778 residues long: Hyperosmolality-gated Ca2+ permeable channel 1.4 (778 aa).

The next 10 helical transmembrane spans lie at 7–27, 101–121, 158–178, 375–395, 427–447, 467–487, 512–532, 584–604, 626–646, and 651–671; these read IGLA…LFAI, IYLI…SILV, FWAH…VLMK, FVMH…IAFV, FLPG…LMIM, YYIF…SAFE, ATFF…GEIF, PVTP…YLVF, VHGR…GLMS, and VQST…HRFC. Residues 738 to 778 form a disordered region; sequence VVQTKRQRSRRTTVASSNASRGSSQSTPFNQLDLGKGKPET. Residues 753–763 show a composition bias toward low complexity; the sequence is SSNASRGSSQS.

It belongs to the CSC1 (TC 1.A.17) family.

Its subcellular location is the membrane. Functionally, acts as an osmosensitive calcium-permeable cation channel. This is Hyperosmolality-gated Ca2+ permeable channel 1.4 from Arabidopsis thaliana (Mouse-ear cress).